A 435-amino-acid polypeptide reads, in one-letter code: Eukaryotic peptide chain release factor subunit 1 (435 aa).

Belongs to the eukaryotic release factor 1 family. Heterodimer of two subunits, one of which binds GTP.

The protein localises to the cytoplasm. Directs the termination of nascent peptide synthesis (translation) in response to the termination codon UGA. In T.thermophila UAA and UAG codes for glutamine. This is Eukaryotic peptide chain release factor subunit 1 (ERF1) from Tetrahymena thermophila.